Consider the following 932-residue polypeptide: Isoleucine--tRNA ligase (932 aa).

A 'HIGH' region motif is present at residues 59–69 (PYANGTIHIGH). Glutamate 562 is an L-isoleucyl-5'-AMP binding site. A 'KMSKS' region motif is present at residues 603-607 (KMSKS). Lysine 606 provides a ligand contact to ATP. The Zn(2+) site is built by cysteine 899, cysteine 902, cysteine 915, and cysteine 918.

It belongs to the class-I aminoacyl-tRNA synthetase family. IleS type 1 subfamily. In terms of assembly, monomer. It depends on Zn(2+) as a cofactor.

Its subcellular location is the cytoplasm. The catalysed reaction is tRNA(Ile) + L-isoleucine + ATP = L-isoleucyl-tRNA(Ile) + AMP + diphosphate. Its function is as follows. Catalyzes the attachment of isoleucine to tRNA(Ile). As IleRS can inadvertently accommodate and process structurally similar amino acids such as valine, to avoid such errors it has two additional distinct tRNA(Ile)-dependent editing activities. One activity is designated as 'pretransfer' editing and involves the hydrolysis of activated Val-AMP. The other activity is designated 'posttransfer' editing and involves deacylation of mischarged Val-tRNA(Ile). The chain is Isoleucine--tRNA ligase from Pasteurella multocida (strain Pm70).